The primary structure comprises 101 residues: MAKVALIQRELKREKLAAKYAAKYAELKAIAADAKRSDEERDAARLGLQKLPRNANPTRQRNRCEITGRPRGTFRQFGLGRAKIRELAFAGDIPGVTKASW.

This sequence belongs to the universal ribosomal protein uS14 family. In terms of assembly, part of the 30S ribosomal subunit. Contacts proteins S3 and S10.

Binds 16S rRNA, required for the assembly of 30S particles and may also be responsible for determining the conformation of the 16S rRNA at the A site. The polypeptide is Small ribosomal subunit protein uS14 (Delftia acidovorans (strain DSM 14801 / SPH-1)).